Reading from the N-terminus, the 409-residue chain is NDP-glycosyltransferase ltbB (409 aa).

Residue Asn36 is glycosylated (N-linked (GlcNAc...) asparagine). Residues 319–339 (IWAFAYVWAWLQTLYTAPWIA) form a helical membrane-spanning segment.

This sequence belongs to the GT2 glycosyltransferase family.

Its subcellular location is the membrane. It functions in the pathway secondary metabolite biosynthesis. NDP-glycosyltransferase; part of the gene cluster that mediates the biosynthesis of luteodienoside A, a glycosylated polyketide consisting of an unusual 1-O-beta-D-glucopyranosyl-myo-inositol (glucinol) ester of 3-hydroxy-2,2,4-trimethylocta-4,6-dienoic acid. LtbB likely serves as a glucinol synthase by transferring D-glucose to myo-inositol using NDP-glucose as a substrate. The ltbA carnitine O-acyltransferase (cAT) domain uses glucinol produced by the glycosyltransferase ltbB as an offloading substrate to release luteodienoside A from the HR-PKS. Since ltbA and ltbB are sufficient for the biosynthesis of luteodienoside A, the functions of the methyltransferase ltbC and the FAD-binding monooxygenase ltbD within the pathway remain obscur. The sequence is that of NDP-glycosyltransferase ltbB from Aspergillus luteorubrus.